We begin with the raw amino-acid sequence, 91 residues long: UPF0386 protein CC_0226 (91 aa).

It belongs to the UPF0386 family.

This is UPF0386 protein CC_0226 from Caulobacter vibrioides (strain ATCC 19089 / CIP 103742 / CB 15) (Caulobacter crescentus).